We begin with the raw amino-acid sequence, 116 residues long: Ribosome-binding factor A (116 aa).

It belongs to the RbfA family. In terms of assembly, monomer. Binds 30S ribosomal subunits, but not 50S ribosomal subunits or 70S ribosomes.

Its subcellular location is the cytoplasm. Functionally, one of several proteins that assist in the late maturation steps of the functional core of the 30S ribosomal subunit. Associates with free 30S ribosomal subunits (but not with 30S subunits that are part of 70S ribosomes or polysomes). Required for efficient processing of 16S rRNA. May interact with the 5'-terminal helix region of 16S rRNA. This is Ribosome-binding factor A from Streptococcus pyogenes serotype M5 (strain Manfredo).